The chain runs to 1134 residues: Sterol regulatory element-binding protein 1 (1134 aa).

Residues 1 to 60 (MDELAFGEAALEQTLAEMCELDTAVLNDIEDMLQLINNQDSDFPGLFDAPYAGGETGDTG) are transcriptional activation (acidic). Residues 1-477 (MDELAFGEAA…HSRGMLDRSR (477 aa)) are Cytoplasmic-facing. Positions 27–35 (NDIEDMLQL) match the 9aaTAD motif. Residues 46–73 (LFDAPYAGGETGDTGPSSPGANSPESFS) form a disordered region. Over residues 59-69 (TGPSSPGANSP) the composition is skewed to polar residues. Phosphoserine is present on residues Ser-96 and Ser-115. Disordered regions lie at residues 130 to 149 (LQPA…SFPA) and 170 to 195 (SGTL…VLPT). The segment covering 170 to 179 (SGTLPGNTQQ) has biased composition (polar residues). An interaction with LMNA region spans residues 227–487 (QQVPVVLQPH…LALCVLAFLC (261 aa)). The bHLH domain occupies 317 to 367 (EKRTAHNAIEKRYRSSINDKIVELKDLVVGTEAKLNKSAVLRKAIDYIRFL). Residues Ser-331 and Ser-332 each carry the phosphoserine; by SIK1 modification. A leucine-zipper region spans residues 367-388 (LQHSNQKLKQENLTLRSAHKSK). Ser-389 is modified (phosphoserine; by AMPK). Position 395 is a phosphoserine; by SIK1 (Ser-395). Residues 415–468 (VETLTPPPSDAGSPSQSSPLSFGSRASSSGGSDSEPDSPAFEDSQVKAQRLPSH) are disordered. Low complexity predominate over residues 424 to 453 (DAGSPSQSSPLSFGSRASSSGGSDSEPDSP). At Ser-448 the chain carries Phosphoserine. A helical transmembrane segment spans residues 478 to 498 (LALCVLAFLCLTCNPLASLFG). Residues 499–536 (WGILTPSDATGTHRSSGRSMLEAESRDGSNWTQWLLPP) lie on the Lumenal side of the membrane. The helical transmembrane segment at 537 to 557 (LVWLANGLLVLACLALLFVYG) threads the bilayer. The Cytoplasmic portion of the chain corresponds to 558 to 1134 (EPVTRPHSGP…LGGGTTVTSS (577 aa)). Residue Ser-1047 is modified to Phosphoserine.

This sequence belongs to the SREBP family. In terms of assembly, forms a tight complex with SCAP, the SCAP-SREBP complex, in the endoplasmic reticulum membrane and the Golgi apparatus. Interacts with PAQR3; the interaction anchors the SCAP-SREBP complex to the Golgi apparatus in low cholesterol conditions. As to quaternary structure, efficient DNA binding of the soluble transcription factor fragment requires dimerization with another bHLH protein. Interacts with CEBPA, the interaction produces a transcriptional synergy. Interacts with LMNA. Processed in the Golgi apparatus, releasing the protein from the membrane. At low cholesterol the SCAP-SREBP complex is recruited into COPII vesicles for export from the endoplasmic reticulum. In the Golgi, complex SREBPs are cleaved sequentially by site-1 (MBTPS1, S1P) and site-2 (MBTPS2, S2P) proteases. The first cleavage by site-1 protease occurs within the luminal loop, the second cleavage by site-2 protease occurs within the first transmembrane domain, releasing the transcription factor from the Golgi membrane. In terms of processing, phosphorylated by AMPK, leading to suppress protein processing and nuclear translocation, and repress target gene expression. Phosphorylation at Ser-389 by SIK1 represses activity possibly by inhibiting DNA-binding. Post-translationally, SCAP-free SREBF1 is ubiquitinated by the BCR(ARMC5) complex, leading to its degradation. Ubiquitinated; the nuclear form has a rapid turnover and is rapidly ubiquitinated and degraded by the proteasome in the nucleus. Predominant isoform expressed in most tissues. Predominates in liver, adrenal gland, brain and adipose tissue. Also found in kidney, thymus, testis, muscle, jejunum, and ileum. In terms of tissue distribution, expressed only in select tissues, such as intestinal epithelial, heart, macrophage and bone marrow dendritic cells. Also found in kidney, thymus, testis, muscle, jejunum, and ileum.

It localises to the endoplasmic reticulum membrane. Its subcellular location is the golgi apparatus membrane. It is found in the cytoplasmic vesicle. The protein resides in the COPII-coated vesicle membrane. The protein localises to the nucleus. Activation by cleavage is down-regulated upon activation of SIRT3-dependent PRKAA1/AMPK-alpha signaling cascade which leads to inhibition of ATP-consuming lipogenesis to restore cellular energy balance. In terms of biological role, precursor of the transcription factor form (Processed sterol regulatory element-binding protein 1), which is embedded in the endoplasmic reticulum membrane. Low sterol concentrations promote processing of this form, releasing the transcription factor form that translocates into the nucleus and activates transcription of genes involved in cholesterol biosynthesis and lipid homeostasis. Key transcription factor that regulates expression of genes involved in cholesterol biosynthesis and lipid homeostasis. Binds to the sterol regulatory element 1 (SRE-1) (5'-ATCACCCCAC-3'). Has dual sequence specificity binding to both an E-box motif (5'-ATCACGTGA-3') and to SRE-1 (5'-ATCACCCCAC-3'). Regulates the promoters of genes involved in cholesterol biosynthesis and the LDL receptor (LDLR) pathway of sterol regulation. Its function is as follows. Isoform expressed only in select tissues, which has higher transcriptional activity compared to SREBP-1C. Able to stimulate both lipogenic and cholesterogenic gene expression. Has a role in the nutritional regulation of fatty acids and triglycerides in lipogenic organs such as the liver. Required for innate immune response in macrophages by regulating lipid metabolism. Functionally, predominant isoform expressed in most tissues, which has weaker transcriptional activity compared to isoform SREBP-1A. Primarily controls expression of lipogenic gene. Strongly activates global lipid synthesis in rapidly growing cells. The polypeptide is Sterol regulatory element-binding protein 1 (Mus musculus (Mouse)).